The primary structure comprises 166 residues: Ubiquitin-fold modifier-conjugating enzyme 1 (166 aa).

The active-site Glycyl thioester intermediate is the C116.

Belongs to the ubiquitin-conjugating enzyme family. UFC1 subfamily.

Its function is as follows. E2-like enzyme which forms an intermediate with UFM1 via a thioester linkage. This chain is Ubiquitin-fold modifier-conjugating enzyme 1, found in Monosiga brevicollis (Choanoflagellate).